Reading from the N-terminus, the 162-residue chain is Phosphopantetheine adenylyltransferase (162 aa).

Thr9 contacts substrate. Residues 9-10 (TF) and His17 each bind ATP. Positions 41, 77, and 91 each coordinate substrate. ATP contacts are provided by residues 92–94 (GLR), Glu102, and 127–133 (RQAIASK).

The protein belongs to the bacterial CoaD family. In terms of assembly, homohexamer. Mg(2+) is required as a cofactor.

The protein resides in the cytoplasm. The catalysed reaction is (R)-4'-phosphopantetheine + ATP + H(+) = 3'-dephospho-CoA + diphosphate. It functions in the pathway cofactor biosynthesis; coenzyme A biosynthesis; CoA from (R)-pantothenate: step 4/5. In terms of biological role, reversibly transfers an adenylyl group from ATP to 4'-phosphopantetheine, yielding dephospho-CoA (dPCoA) and pyrophosphate. This chain is Phosphopantetheine adenylyltransferase, found in Cereibacter sphaeroides (strain ATCC 17025 / ATH 2.4.3) (Rhodobacter sphaeroides).